Reading from the N-terminus, the 287-residue chain is Myogenin (287 aa).

Phosphoserine; by CaMK2G occurs at positions 77 and 79. The region spanning Asp81–Leu132 is the bHLH domain. Phosphothreonine; by CaMK2G is present on Thr87.

As to quaternary structure, homodimer and heterodimer with E12; heterodimerization enhances MYOG DNA-binding and transcriptional activities. Interacts with SMARCA4/BRG1/BAF190A. Interacts (via C-terminal region) with SSRP1 and SUPT16H; the interaction is indicative of an interaction with the FACT complex. Interacts with CSRP3. Post-translationally, phosphorylated by CAMK2G on threonine and serine amino acids in a muscle activity-dependent manner. Phosphorylation of Thr-87 impairs both DNA-binding and trans-activation functions in contracting muscles. As to expression, expressed in muscle (at protein level).

Its subcellular location is the nucleus. Its function is as follows. Acts as a transcriptional activator that promotes transcription of muscle-specific target genes and plays a role in muscle differentiation, cell cycle exit and muscle atrophy. Essential for the development of functional embryonic skeletal fiber muscle differentiation. However is dispensable for postnatal skeletal muscle growth; phosphorylation by CAMK2G inhibits its transcriptional activity in respons to muscle activity. Required for the recruitment of the FACT complex to muscle-specific promoter regions, thus promoting gene expression initiation. During terminal myoblast differentiation, plays a role as a strong activator of transcription at loci with an open chromatin structure previously initiated by MYOD1. Together with MYF5 and MYOD1, co-occupies muscle-specific gene promoter core regions during myogenesis. Also cooperates with myocyte-specific enhancer factor MEF2D and BRG1-dependent recruitment of SWI/SNF chromatin-remodeling enzymes to alter chromatin structure at myogenic late gene promoters. Facilitates cell cycle exit during terminal muscle differentiation through the up-regulation of miR-20a expression, which in turn represses genes involved in cell cycle progression. Binds to the E-box containing (E1) promoter region of the miR-20a gene. Also plays a role in preventing reversal of muscle cell differentiation. Contributes to the atrophy-related gene expression in adult denervated muscles. Induces fibroblasts to differentiate into myoblasts. The protein is Myogenin (Myog) of Rattus norvegicus (Rat).